The chain runs to 249 residues: Large ribosomal subunit protein uL4 (249 aa).

Belongs to the universal ribosomal protein uL4 family. In terms of assembly, part of the 50S ribosomal subunit.

Functionally, one of the primary rRNA binding proteins, this protein initially binds near the 5'-end of the 23S rRNA. It is important during the early stages of 50S assembly. It makes multiple contacts with different domains of the 23S rRNA in the assembled 50S subunit and ribosome. Forms part of the polypeptide exit tunnel. This is Large ribosomal subunit protein uL4 from Methanoculleus marisnigri (strain ATCC 35101 / DSM 1498 / JR1).